Reading from the N-terminus, the 143-residue chain is Putative protein FPV235 (143 aa).

The protein is Putative protein FPV235 of Vertebrata (FPV).